The sequence spans 214 residues: Pyridoxine/pyridoxamine 5'-phosphate oxidase (214 aa).

Residues 9-12 (RKDY) and lysine 67 each bind substrate. FMN-binding positions include 62-67 (RMVLLK), 77-78 (FT), arginine 83, lysine 84, and glutamine 106. Tyrosine 124, arginine 128, and serine 132 together coordinate substrate. FMN-binding positions include 141–142 (QS) and tryptophan 186. 192 to 194 (RLH) provides a ligand contact to substrate. Residue arginine 196 participates in FMN binding.

The protein belongs to the pyridoxamine 5'-phosphate oxidase family. As to quaternary structure, homodimer. FMN serves as cofactor.

It catalyses the reaction pyridoxamine 5'-phosphate + O2 + H2O = pyridoxal 5'-phosphate + H2O2 + NH4(+). The catalysed reaction is pyridoxine 5'-phosphate + O2 = pyridoxal 5'-phosphate + H2O2. It participates in cofactor metabolism; pyridoxal 5'-phosphate salvage; pyridoxal 5'-phosphate from pyridoxamine 5'-phosphate: step 1/1. The protein operates within cofactor metabolism; pyridoxal 5'-phosphate salvage; pyridoxal 5'-phosphate from pyridoxine 5'-phosphate: step 1/1. Catalyzes the oxidation of either pyridoxine 5'-phosphate (PNP) or pyridoxamine 5'-phosphate (PMP) into pyridoxal 5'-phosphate (PLP). The sequence is that of Pyridoxine/pyridoxamine 5'-phosphate oxidase from Nostoc sp. (strain PCC 7120 / SAG 25.82 / UTEX 2576).